Consider the following 173-residue polypeptide: Calcium-binding protein 5 (173 aa).

EF-hand domains lie at 28–63 (DEIE…MGYM), 82–99 (GRVD…KLLA), 105–140 (IGVQ…LLGE), and 142–173 (LTPR…MMSR). 4 residues coordinate Ca(2+): Asp-41, Asp-43, Asp-45, and Asp-52. Positions 118, 120, 122, 124, 129, 155, 157, 159, 161, and 166 each coordinate Ca(2+).

In terms of assembly, interacts with CACNA1C (via C-terminal CDB motif) in a calcium-dependent manner. Interacts with STXBP1. Interacts with MYO6. In terms of tissue distribution, retina.

The protein resides in the cytoplasm. Functionally, inhibits calcium-dependent inactivation of L-type calcium channel and shifts voltage dependence of activation to more depolarized membrane potentials. Involved in the transmission of light signals. May positively regulate neurotransmitter vesicle endocytosis and exocytosis in a salt-dependent manner. May play a role in the extension and network organization of neurites. The sequence is that of Calcium-binding protein 5 (CABP5) from Homo sapiens (Human).